Here is a 79-residue protein sequence, read N- to C-terminus: Morintide mO1 (79 aa).

Positions 1-20 are cleaved as a signal peptide; it reads MAKLSFLSLFLLCLVATATA. Residues 21–63 enclose the Chitin-binding type-1 domain; it reads QNCGRQAGNRACANQLCCSQYGFCGSTSEYCSRANGCQSNCRG. Disulfide bonds link cysteine 23–cysteine 38, cysteine 32–cysteine 44, cysteine 37–cysteine 51, and cysteine 57–cysteine 61. Positions 64–79 are excised as a propeptide; sequence GGGADGAGGEAGGGGP.

Leaves (at protein level).

Functionally, chitin-binding protein which functions in defense against chitin-containing fungal pathogens. Inhibits the growth of budding hyphae in A.alternata and A.brassiciola. This is Morintide mO1 from Moringa oleifera (Horseradish tree).